Reading from the N-terminus, the 31-residue chain is Photosystem II reaction center protein T (31 aa).

The helical transmembrane segment at 3–23 threads the bilayer; it reads ALVYTFLLVTTLGILFFSIIF.

It belongs to the PsbT family. As to quaternary structure, PSII is composed of 1 copy each of membrane proteins PsbA, PsbB, PsbC, PsbD, PsbE, PsbF, PsbH, PsbI, PsbJ, PsbK, PsbL, PsbM, PsbT, PsbX, PsbY, PsbZ, Psb30/Ycf12, at least 3 peripheral proteins of the oxygen-evolving complex and a large number of cofactors. It forms dimeric complexes.

It localises to the plastid. It is found in the cyanelle thylakoid membrane. Functionally, found at the monomer-monomer interface of the photosystem II (PS II) dimer, plays a role in assembly and dimerization of PSII. PSII is a light-driven water plastoquinone oxidoreductase, using light energy to abstract electrons from H(2)O, generating a proton gradient subsequently used for ATP formation. This is Photosystem II reaction center protein T from Cyanophora paradoxa.